The sequence spans 85 residues: Exodeoxyribonuclease 7 small subunit (85 aa).

The protein belongs to the XseB family. Heterooligomer composed of large and small subunits.

It is found in the cytoplasm. The enzyme catalyses Exonucleolytic cleavage in either 5'- to 3'- or 3'- to 5'-direction to yield nucleoside 5'-phosphates.. In terms of biological role, bidirectionally degrades single-stranded DNA into large acid-insoluble oligonucleotides, which are then degraded further into small acid-soluble oligonucleotides. This Mycobacterium bovis (strain ATCC BAA-935 / AF2122/97) protein is Exodeoxyribonuclease 7 small subunit.